A 440-amino-acid polypeptide reads, in one-letter code: Glycerol-3-phosphate dehydrogenase [NAD(+)], chloroplastic (440 aa).

A chloroplast-targeting transit peptide spans 1 to 47 (MAAAAAATFLPHTPTPRRRLAVAVHSPTRRRLSLVFSGPPDGALSVA). A disordered region spans residues 57–76 (EEAAAAVSAPRGGGGGGGKE). NAD(+) is bound by residues 114 to 119 (GGGSFG), Phe191, Lys214, and Ala248. Residue Lys214 participates in substrate binding. The Proton acceptor role is filled by Lys299. 2 residues coordinate NAD(+): Arg363 and Glu389. 363-364 (RN) provides a ligand contact to substrate.

Belongs to the NAD-dependent glycerol-3-phosphate dehydrogenase family.

Its subcellular location is the plastid. The protein resides in the chloroplast. It carries out the reaction sn-glycerol 3-phosphate + NAD(+) = dihydroxyacetone phosphate + NADH + H(+). It functions in the pathway membrane lipid metabolism; glycerophospholipid metabolism. In terms of biological role, required to supply glycerol-3-phosphate in the chloroplast for the synthesis of glycerolipids. In Oryza sativa subsp. japonica (Rice), this protein is Glycerol-3-phosphate dehydrogenase [NAD(+)], chloroplastic.